The primary structure comprises 1107 residues: MDGKRRPGPGPGVPPKRARGGLWDDDDAPRPSQFEEDLALMEEMEAEHRLQEQEEEELQSVLEGVADGQVPPSAIDPRWLRPTPPALDPQTEPLIFQQLEIDHYVGPAQPVPGGPPPSRGSVPVLRAFGVTDEGFSVCCHIHGFAPYFYTPAPPGFGPEHMGDLQRELNLAISRDSRGGRELTGPAVLAVELCSRESMFGYHGHGPSPFLRITVALPRLVAPARRLLEQGIRVAGLGTPSFAPYEANVDFEIRFMVDTDIVGCNWLELPAGKYALRLKEKATQCQLEADVLWSDVVSHPPEGPWQRIAPLRVLSFDIECAGRKGIFPEPERDPVIQICSLGLRWGEPEPFLRLALTLRPCAPILGAKVQSYEKEEDLLQAWSTFIRIMDPDVITGYNIQNFDLPYLISRAQTLKVQTFPFLGRVAGLCSNIRDSSFQSKQTGRRDTKVVSMVGRVQMDMLQVLLREYKLRSYTLNAVSFHFLGEQKEDVQHSIITDLQNGNDQTRRRLAVYCLKDAYLPLRLLERLMVLVNAVEMARVTGVPLSYLLSRGQQVKVVSQLLRQAMHEGLLMPVVKSEGGEDYTGATVIEPLKGYYDVPIATLDFSSLYPSIMMAHNLCYTTLLRPGTAQKLGLTEDQFIRTPTGDEFVKTSVRKGLLPQILENLLSARKRAKAELAKETDPLRRQVLDGRQLALKVSANSVYGFTGAQVGKLPCLEISQSVTGFGRQMIEKTKQLVESKYTVENGYSTSAKVVYGDTDSVMCRFGVSSVAEAMALGREAADWVSGHFPSPIRLEFEKVYFPYLLISKKRYAGLLFSSRPDAHDRMDCKGLEAVRRDNCPLVANLVTASLRRLLIDRDPEGAVAHAQDVISDLLCNRIDISQLVITKELTRAASDYAGKQAHVELAERMRKRDPGSAPSLGDRVPYVIISAAKGVAAYMKSEDPLFVLEHSLPIDTQYYLEQQLAKPLLRIFEPILGEGRAEAVLLRGDHTRCKTVLTGKVGGLLAFAKRRNCCIGCRTVLSHQGAVCEFCQPRESELYQKEVSHLNALEERFSRLWTQCQRCQGSLHEDVICTSRDCPIFYMRKKVRKDLEDQEQLLRRFGPPGPEAW.

Residues 1–34 (MDGKRRPGPGPGVPPKRARGGLWDDDDAPRPSQF) are disordered. The Nuclear localization signal motif lies at 4 to 19 (KRRPGPGPGVPPKRAR). Arginine 19 is subject to Omega-N-methylarginine. A Glycyl lysine isopeptide (Lys-Gly) (interchain with G-Cter in SUMO2) cross-link involves residue lysine 574. Cysteine 1012, cysteine 1015, cysteine 1026, and cysteine 1029 together coordinate Zn(2+). The CysA-type zinc finger occupies 1012–1029 (CIGCRTVLSHQGAVCEFC). [4Fe-4S] cluster is bound by residues cysteine 1058, cysteine 1061, cysteine 1071, and cysteine 1076. The CysB motif motif lies at 1058 to 1076 (CQRCQGSLHEDVICTSRDC).

The protein belongs to the DNA polymerase type-B family. Component of the tetrameric DNA polymerase delta complex (Pol-delta4), which consists of POLD1/p125, POLD2/p50, POLD3/p66/p68 and POLD4/p12, with POLD1 bearing both DNA polymerase and 3' to 5' proofreading exonuclease activities. Within Pol-delta4, directly interacts with POLD2 and POLD4. Following genotoxic stress by DNA-damaging agents, such as ultraviolet light and methyl methanesulfonate, or by replication stress induced by treatment with hydroxyurea or aphidicolin, Pol-delta4 is converted into a trimeric form of the complex (Pol-delta3) by POLD4 degradation. Pol-delta3 is the major form at S phase replication sites and DNA damage sites. POLD1 displays different catalytic properties depending upon the complex it is found in. It exhibits higher proofreading activity and fidelity than Pol-delta4, making it particularly well suited to respond to DNA damage. Directly interacts with PCNA, as do POLD3 and POLD4; this interaction stimulates Pol-delta4 polymerase activity. As POLD2 and POLD4, directly interacts with WRNIP1; this interaction stimulates DNA polymerase delta-mediated DNA synthesis, independently of the presence of PCNA. This stimulation may be due predominantly to an increase of initiation frequency and also to increased processivity. Also observed as a dimeric complex with POLD2 (Pol-delta2 complex). Pol-delta2 is relatively insensitive to the PCNA stimulation (2-5-fold) compared to Pol-delta4 that is stimulated by over 50-fold. The DNA polymerase delta complex interacts with POLDIP2; this interaction is probably mediated through direct binding to POLD2. Interacts with CIAO1. Interacts with POLDIP2. Interacts with RFC1. Requires [4Fe-4S] cluster as cofactor. Widely expressed, with high levels of expression in heart and lung.

Its subcellular location is the nucleus. The catalysed reaction is DNA(n) + a 2'-deoxyribonucleoside 5'-triphosphate = DNA(n+1) + diphosphate. Its activity is regulated as follows. Regulated by alteration of quaternary structure. Exhibits burst rates of DNA synthesis are about 5 times faster in the presence of POLD4 (Pol-delta4 complex) than in its absence (Pol-delta3 complex), while the affinity of the enzyme for its DNA and dNTP substrates appears unchanged. The Pol-delta3 complex is more likely to proofread DNA synthesis because it cleaves single-stranded DNA twice as fast and transfers mismatched DNA from the polymerase to the exonuclease sites 9 times faster compared to the Pol-delta3 complex. Pol-delta3 also extends mismatched primers 3 times more slowly in the absence of POLD4. The conversion of Pol-delta4 into Pol-delta3 is induced by genotoxic stress or by replication stress leading POLD4 degradation. Stimulated in the presence of PCNA. This stimulation is further increased in the presence of KCTD13/PDIP1, most probably via direct interaction between KCTD13 and POLD2. Its function is as follows. As the catalytic component of the trimeric (Pol-delta3 complex) and tetrameric DNA polymerase delta complexes (Pol-delta4 complex), plays a crucial role in high fidelity genome replication, including in lagging strand synthesis, and repair. Exhibits both DNA polymerase and 3'- to 5'-exonuclease activities. Requires the presence of accessory proteins POLD2, POLD3 and POLD4 for full activity. Depending upon the absence (Pol-delta3) or the presence of POLD4 (Pol-delta4), displays differences in catalytic activity. Most notably, expresses higher proofreading activity in the context of Pol-delta3 compared with that of Pol-delta4. Although both Pol-delta3 and Pol-delta4 process Okazaki fragments in vitro, Pol-delta3 may be better suited to fulfill this task, exhibiting near-absence of strand displacement activity compared to Pol-delta4 and stalling on encounter with the 5'-blocking oligonucleotides. Pol-delta3 idling process may avoid the formation of a gap, while maintaining a nick that can be readily ligated. Along with DNA polymerase kappa, DNA polymerase delta carries out approximately half of nucleotide excision repair (NER) synthesis following UV irradiation. Under conditions of DNA replication stress, in the presence of POLD3 and POLD4, may catalyze the repair of broken replication forks through break-induced replication (BIR). Involved in the translesion synthesis (TLS) of templates carrying O6-methylguanine, 8oxoG or abasic sites. The chain is DNA polymerase delta catalytic subunit from Homo sapiens (Human).